The sequence spans 369 residues: Molybdenum import ATP-binding protein ModC (369 aa).

The ABC transporter domain maps to 7–243 (PGQAGIHARF…LDLPMAMTDD (237 aa)). An ATP-binding site is contributed by 41 to 48 (GQSGSGKT). Positions 304-369 (EGSILNVLAV…AQIKAVSLLA (66 aa)) constitute a Mop domain.

This sequence belongs to the ABC transporter superfamily. Molybdate importer (TC 3.A.1.8) family. In terms of assembly, the complex is composed of two ATP-binding proteins (ModC), two transmembrane proteins (ModB) and a solute-binding protein (ModA).

It localises to the cell inner membrane. The catalysed reaction is molybdate(out) + ATP + H2O = molybdate(in) + ADP + phosphate + H(+). Functionally, part of the ABC transporter complex ModABC involved in molybdenum import. Responsible for energy coupling to the transport system. This is Molybdenum import ATP-binding protein ModC from Bordetella pertussis (strain Tohama I / ATCC BAA-589 / NCTC 13251).